Reading from the N-terminus, the 142-residue chain is Galactose-6-phosphate isomerase subunit LacA 2 (142 aa).

It belongs to the LacAB/RpiB family. In terms of assembly, heteromultimeric protein consisting of LacA and LacB.

It catalyses the reaction aldehydo-D-galactose 6-phosphate = keto-D-tagatose 6-phosphate. The protein operates within carbohydrate metabolism; D-galactose 6-phosphate degradation; D-tagatose 6-phosphate from D-galactose 6-phosphate: step 1/1. This chain is Galactose-6-phosphate isomerase subunit LacA 2, found in Streptococcus pyogenes serotype M3 (strain ATCC BAA-595 / MGAS315).